The primary structure comprises 341 residues: MRRNSERPVRITEVCLRDGSHVMKHQFTEEQVRFVTRALDEAGMHYIEVSHGDGLGGSTLQYGKSLVNEMKLIEAAVDECKQAQIAVLLIPGIGTIHELKQAANIGAKLVRVATHVTEADVSAQHIQFARELGMEVCGFLMMAHSASVEKLVEQAKLMESYGAEAVYVTDSAGALLPHEVRERIRALRQSLNIEIGFHGHNNLSVAVANTITAIEEGATRIDGSVRCLGAGAGNAQTEVLLAVLDRMGYKLDIDLYKMMDVAEEVVAPLLPVPQEIQKGSLVMGYAGVYSSFLLHAERAAQRFNVDARDILIELGKRKVVGGQEDMILDVAAELAKIKMEV.

In terms of domain architecture, Pyruvate carboxyltransferase spans valine 9–methionine 259. Arginine 17 to aspartate 18 serves as a coordination point for substrate. Aspartate 18 provides a ligand contact to Mn(2+). The active-site Proton acceptor is the histidine 21. Substrate-binding residues include serine 171 and histidine 198. Positions 198 and 200 each coordinate Mn(2+). Tyrosine 289 provides a ligand contact to substrate.

The protein belongs to the 4-hydroxy-2-oxovalerate aldolase family.

It catalyses the reaction (S)-4-hydroxy-2-oxopentanoate = acetaldehyde + pyruvate. This is 4-hydroxy-2-oxovalerate aldolase from Bacillus thuringiensis (strain Al Hakam).